We begin with the raw amino-acid sequence, 49 residues long: Large ribosomal subunit protein bL33 (49 aa).

This sequence belongs to the bacterial ribosomal protein bL33 family.

In Streptococcus pyogenes serotype M18 (strain MGAS8232), this protein is Large ribosomal subunit protein bL33.